Here is a 565-residue protein sequence, read N- to C-terminus: NAD-dependent malic enzyme (565 aa).

The active-site Proton donor is the Tyr-104. Residue Arg-157 coordinates NAD(+). The active-site Proton acceptor is the Lys-175. A divalent metal cation contacts are provided by Glu-246, Asp-247, and Asp-270. NAD(+)-binding residues include Asp-270 and Asn-418.

This sequence belongs to the malic enzymes family. As to quaternary structure, homotetramer. Mg(2+) serves as cofactor. The cofactor is Mn(2+).

The catalysed reaction is (S)-malate + NAD(+) = pyruvate + CO2 + NADH. It carries out the reaction oxaloacetate + H(+) = pyruvate + CO2. The chain is NAD-dependent malic enzyme from Salmonella choleraesuis (strain SC-B67).